The chain runs to 87 residues: Small ribosomal subunit protein uS17 (87 aa).

The protein belongs to the universal ribosomal protein uS17 family. Part of the 30S ribosomal subunit.

In terms of biological role, one of the primary rRNA binding proteins, it binds specifically to the 5'-end of 16S ribosomal RNA. The chain is Small ribosomal subunit protein uS17 from Listeria innocua serovar 6a (strain ATCC BAA-680 / CLIP 11262).